Reading from the N-terminus, the 403-residue chain is Protein LAZ1 homolog 2 (403 aa).

The next 6 membrane-spanning stretches (helical) occupy residues 16-36, 50-70, 162-182, 191-211, 236-256, and 269-289; these read SLII…YSIL, WIVS…ISLS, MILK…GVYG, GYPY…FCLV, IVFA…YGIL, and FLIC…FPAE. The tract at residues 381–403 is disordered; it reads SDGKEETEVTEEVTVETSVPPKE.

It belongs to the TMEM184 family.

It localises to the membrane. This is Protein LAZ1 homolog 2 from Arabidopsis thaliana (Mouse-ear cress).